Reading from the N-terminus, the 300-residue chain is Protein XRI1 (300 aa).

In terms of assembly, interacts (via C-terminal domain) with MIP1.

The protein localises to the nucleus. Its function is as follows. Required for mitotic division of the generative cell nucleus and the development of mature tricellular pollen grains, and for male and female meiosis. The protein is Protein XRI1 (XRI1) of Arabidopsis thaliana (Mouse-ear cress).